Reading from the N-terminus, the 211-residue chain is ATP phosphoribosyltransferase (211 aa).

This sequence belongs to the ATP phosphoribosyltransferase family. Short subfamily. In terms of assembly, heteromultimer composed of HisG and HisZ subunits.

The protein localises to the cytoplasm. It carries out the reaction 1-(5-phospho-beta-D-ribosyl)-ATP + diphosphate = 5-phospho-alpha-D-ribose 1-diphosphate + ATP. The protein operates within amino-acid biosynthesis; L-histidine biosynthesis; L-histidine from 5-phospho-alpha-D-ribose 1-diphosphate: step 1/9. Functionally, catalyzes the condensation of ATP and 5-phosphoribose 1-diphosphate to form N'-(5'-phosphoribosyl)-ATP (PR-ATP). Has a crucial role in the pathway because the rate of histidine biosynthesis seems to be controlled primarily by regulation of HisG enzymatic activity. The polypeptide is ATP phosphoribosyltransferase (Thermosynechococcus vestitus (strain NIES-2133 / IAM M-273 / BP-1)).